The primary structure comprises 234 residues: Thrombin-like enzyme contortrixobin (234 aa).

Positions 1–225 (VVGGDECNIN…YNDWIQSIIA (225 aa)) constitute a Peptidase S1 domain. Cystine bridges form between Cys-7–Cys-139, Cys-26–Cys-42, Cys-74–Cys-232, Cys-118–Cys-186, Cys-150–Cys-165, and Cys-176–Cys-201. Active-site charge relay system residues include His-41 and Asp-86. The active-site Charge relay system is Ser-180.

Monomer. Not glycosylated. Expressed by the venom gland.

The protein resides in the secreted. Strongly inhibited by diisopropylfluorophosphate (DFP) and to a lesser extent by PMSF, benzamidine and 4,6-diamidino-2-phenylindole. Low inhibition by hirudin. In terms of biological role, thrombin-like snake venom serine protease that cleaves beta chain of fibrinogen (FGB), releasing fibrinopeptide B. Has a coagulant activity activating blood coagulation factors V (F5) and XIII (F13A1). The protein is Thrombin-like enzyme contortrixobin of Agkistrodon contortrix contortrix (Southern copperhead).